A 148-amino-acid polypeptide reads, in one-letter code: Putative lysozyme C-2 (148 aa).

An N-terminal signal peptide occupies residues 1–18 (MKALLVLGFLLLSASVQA). Residues 19 to 148 (KVFKHCELAR…LSGYIRNCGV (130 aa)) form the C-type lysozyme domain. Disulfide bonds link Cys24–Cys146, Cys48–Cys134, Cys83–Cys99, and Cys95–Cys113. Active-site residues include Glu53 and Asp71.

It belongs to the glycosyl hydrolase 22 family. As to quaternary structure, monomer.

The protein localises to the secreted. The enzyme catalyses Hydrolysis of (1-&gt;4)-beta-linkages between N-acetylmuramic acid and N-acetyl-D-glucosamine residues in a peptidoglycan and between N-acetyl-D-glucosamine residues in chitodextrins.. Lysozymes have primarily a bacteriolytic function; those in tissues and body fluids are associated with the monocyte-macrophage system and enhance the activity of immunoagents. In the intestine they may also have a digestive function. The protein is Putative lysozyme C-2 (Lyz2) of Rattus norvegicus (Rat).